The following is a 258-amino-acid chain: Global transcriptional regulator CodY (258 aa).

The interval 1–156 (MSTLLDKTRK…SATIVGLEIL (156 aa)) is GAF domain. Positions 204–223 (ASKIADKVGITRSVIVNALR) form a DNA-binding region, H-T-H motif.

The protein belongs to the CodY family.

The protein localises to the cytoplasm. In terms of biological role, DNA-binding global transcriptional regulator which is involved in the adaptive response to starvation and acts by directly or indirectly controlling the expression of numerous genes in response to nutrient availability. During rapid exponential growth, CodY is highly active and represses genes whose products allow adaptation to nutrient depletion. This Clostridium kluyveri (strain NBRC 12016) protein is Global transcriptional regulator CodY.